A 668-amino-acid polypeptide reads, in one-letter code: Protein PLASTID TRANSCRIPTIONALLY ACTIVE 10 (668 aa).

The transit peptide at 1–40 (MQICQTKLNFTFPNPTNPNFCKPKALQWSPPRRISLLPCR) directs the protein to the chloroplast. In terms of domain architecture, S1 motif spans 272-340 (GMVCEGTVTT…YRFRFPLELR (69 aa)). Over residues 362 to 391 (RDGDTNPDEIRRDCGRPPEPRKDPGSKPEE) the composition is skewed to basic and acidic residues. The tract at residues 362–394 (RDGDTNPDEIRRDCGRPPEPRKDPGSKPEEEGL) is disordered. At Ser434 the chain carries Phosphoserine. The segment at 611–668 (KRKEGSTLASQEEETESEEEEEDDDDFDDFDYSILSDESSIGYSEQQPLVNGTQVLTD) is disordered. Residues 621–641 (QEEETESEEEEEDDDDFDDFD) are compositionally biased toward acidic residues. The span at 646-668 (SDESSIGYSEQQPLVNGTQVLTD) shows a compositional bias: polar residues.

In terms of assembly, component of the transcriptionally active chromosome (TAC) complexes. Interacts with PTAC7.

It localises to the plastid. The protein resides in the chloroplast. The protein is Protein PLASTID TRANSCRIPTIONALLY ACTIVE 10 of Arabidopsis thaliana (Mouse-ear cress).